Consider the following 1074-residue polypeptide: Semaphorin-5A (1074 aa).

A signal peptide spans 1 to 22 (MKGACILAWLFSSLGVWRLARP). In terms of domain architecture, Sema spans 35-484 (HPVVSYKEIG…LQEHVVKIPL (450 aa)). Intrachain disulfides connect cysteine 104–cysteine 114 and cysteine 131–cysteine 140. 4 N-linked (GlcNAc...) asparagine glycosylation sites follow: asparagine 147, asparagine 168, asparagine 227, and asparagine 277. Disulfide bonds link cysteine 254/cysteine 357 and cysteine 278/cysteine 320. Residues asparagine 323 and asparagine 367 are each glycosylated (N-linked (GlcNAc...) asparagine). Positions 486 to 533 (RCHFHQTRGACIGAQDPYCGWDAVMKKCTSLEESLSMTQWDQSVPTCP) constitute a PSI domain. 2 N-linked (GlcNAc...) asparagine glycosylation sites follow: asparagine 536 and asparagine 591. TSP type-1 domains follow at residues 540 to 593 (DGSF…TNCS), 595 to 651 (NGGW…LLCP), and 653 to 702 (HVFW…NACP). 6 disulfides stabilise this stretch: cysteine 607–cysteine 644, cysteine 611–cysteine 650, cysteine 622–cysteine 634, cysteine 665–cysteine 696, cysteine 669–cysteine 701, and cysteine 680–cysteine 686. An N-linked (GlcNAc...) asparagine glycan is attached at asparagine 717. 3 consecutive TSP type-1 domains span residues 784 to 839 (NGAW…LPCP), 841 to 896 (DGVW…QTCP), and 897 to 944 (ENWS…VFDS). 6 disulfides stabilise this stretch: cysteine 796/cysteine 833, cysteine 800/cysteine 838, cysteine 811/cysteine 823, cysteine 853/cysteine 890, cysteine 857/cysteine 895, and cysteine 868/cysteine 880. Residues asparagine 898 and asparagine 933 are each glycosylated (N-linked (GlcNAc...) asparagine). The helical transmembrane segment at 969–989 (FHMMAVGLSSSILGCLLTLLV) threads the bilayer. A glycan (N-linked (GlcNAc...) asparagine) is linked at asparagine 1015.

Binds PLXNB3.

The protein resides in the membrane. Its function is as follows. Bifunctional axonal guidance cue regulated by sulfated proteoglycans; attractive effects result from interactions with heparan sulfate proteoglycans (HSPGs), while the inhibitory effects depend on interactions with chondroitin sulfate proteoglycans (CSPGs). Ligand for receptor PLXNB3. In glioma cells, SEMA5A stimulation of PLXNB3 results in the disassembly of F-actin stress fibers, disruption of focal adhesions and cellular collapse as well as inhibition of cell migration and invasion through ARHGDIA-mediated inactivation of RAC1. May promote angiogenesis by increasing endothelial cell proliferation and migration and inhibiting apoptosis. The polypeptide is Semaphorin-5A (Sema5a) (Rattus norvegicus (Rat)).